The following is a 481-amino-acid chain: O-phosphoseryl-tRNA(Sec) selenium transferase (481 aa).

The segment at 1-36 (MKANFGKKEGEYSRLVSKSSNKLLNSLWEKKQIPEE) is tetramerization. Arg-69 serves as a coordination point for pyridoxal 5'-phosphate. The phosphate loop (P-loop) stretch occupies residues 90–100 (GRSGNLLEIQP). Substrate-binding residues include Arg-91, Ser-92, and Gln-99. Lys-277 carries the post-translational modification N6-(pyridoxal phosphate)lysine. Residue Arg-306 participates in substrate binding.

This sequence belongs to the SepSecS family. Homotetramer formed by a catalytic dimer and a non-catalytic dimer serving as a binding platform that orients tRNASec for catalysis. Each tetramer binds the CCA ends of two tRNAs which point to the active sites of the catalytic dimer. The cofactor is pyridoxal 5'-phosphate.

It localises to the cytoplasm. It carries out the reaction O-phospho-L-seryl-tRNA(Sec) + selenophosphate + H2O = L-selenocysteinyl-tRNA(Sec) + 2 phosphate. It functions in the pathway aminoacyl-tRNA biosynthesis; selenocysteinyl-tRNA(Sec) biosynthesis; selenocysteinyl-tRNA(Sec) from L-seryl-tRNA(Sec) (archaeal/eukaryal route): step 2/2. Converts O-phosphoseryl-tRNA(Sec) to selenocysteinyl-tRNA(Sec) required for selenoprotein biosynthesis. The sequence is that of O-phosphoseryl-tRNA(Sec) selenium transferase (secs-1) from Caenorhabditis elegans.